An 869-amino-acid chain; its full sequence is Protein translocase subunit SecA (869 aa).

Residues Gln88, 106 to 110, and Asp509 contribute to the ATP site; that span reads GEGKT. Basic and acidic residues predominate over residues 818 to 840; the sequence is QDEGLKFNQREGEDAPAVREKKI. Residues 818–869 are disordered; the sequence is QDEGLKFNQREGEDAPAVREKKIPRNSPCPCGSGKKYKDCCGKSGPKKGILA. Positions 846, 848, 857, and 858 each coordinate Zn(2+).

It belongs to the SecA family. As to quaternary structure, monomer and homodimer. Part of the essential Sec protein translocation apparatus which comprises SecA, SecYEG and auxiliary proteins SecDF-YajC and YidC. The cofactor is Zn(2+).

The protein resides in the cell inner membrane. It localises to the cytoplasm. The enzyme catalyses ATP + H2O + cellular proteinSide 1 = ADP + phosphate + cellular proteinSide 2.. Part of the Sec protein translocase complex. Interacts with the SecYEG preprotein conducting channel. Has a central role in coupling the hydrolysis of ATP to the transfer of proteins into and across the cell membrane, serving as an ATP-driven molecular motor driving the stepwise translocation of polypeptide chains across the membrane. This chain is Protein translocase subunit SecA, found in Campylobacter curvus (strain 525.92).